Here is a 389-residue protein sequence, read N- to C-terminus: MAGCKVLFFLILALAITFVSAARLLDEEEDIGLVPLPTTSPGPLPTVGLGPFPTANSGPATGIASGTGSASGGLGSLGTNTGPGPLSTTGSSLLPVASSGTLPVTGPGPLPTSSGLLPGASSGNLPGSGSGPLPTVGSGAAATGLGAGAGSVIGGSVPDNTLVFFMHDILGGSNPTARAVTGVVANAALSGQIPFAKPNGANLPVSNGVPSDNNNNGILNNNNVPLLVGLGGTTSNILQNNGNNMLNGLPVANGGQLPSGSSLQMLMFGTLTVMDNELTEGHELGSGLLGKAQGFYVASALDGTSQTMAFTAMFESGGYEDSISFFGVHRTAASESHLGVMGGTGKYVNARGFAIVKTFTGSSGTQQQQPHQFTDGLETVLECTVYLSY.

The signal sequence occupies residues 1-21 (MAGCKVLFFLILALAITFVSA). Composition is skewed to low complexity over residues 50–68 (GPFP…SGTG), 77–86 (LGTNTGPGPL), and 98–135 (SSGT…PLPT). Residues 50 to 135 (GPFPTANSGP…PGSGSGPLPT (86 aa)) form a disordered region.

Belongs to the plant dirigent protein family. In terms of assembly, homodimer.

The protein resides in the secreted. The protein localises to the extracellular space. It is found in the apoplast. In terms of biological role, dirigent proteins impart stereoselectivity on the phenoxy radical-coupling reaction, yielding optically active lignans from two molecules of coniferyl alcohol in the biosynthesis of lignans, flavonolignans, and alkaloids and thus plays a central role in plant secondary metabolism. The chain is Dirigent protein 25 (DIR25) from Arabidopsis thaliana (Mouse-ear cress).